A 181-amino-acid polypeptide reads, in one-letter code: Lysozyme A (181 aa).

The signal sequence occupies residues 1–19 (MRIAFFLLVLAVIIGFAYG). A propeptide spanning residues 139–181 (LTDSRPLGPFNVTESEMAQLFIDHEIAMAQCEAEKTCNGFDLE) is cleaved from the precursor.

Belongs to the dictyostelium lysozyme family. Contains six disulfide bonds.

Its subcellular location is the cytoplasmic vesicle lumen. It catalyses the reaction Hydrolysis of 1,4-beta-linkages between N-acetylmuramic acid and N-acetyl-D-glucosamine residues in a peptidoglycan.. Its function is as follows. Has antibacterial activity against the Gram-positive bacteria B.subtilis, B.megaterium and M.luteus. No antibacterial activity detected against the Gram-positive bacterium S.aureus or against the Gram-negative bacterium E.coli. Lacks chitinase activity. This is Lysozyme A from Dictyostelium discoideum (Social amoeba).